A 256-amino-acid polypeptide reads, in one-letter code: Methylesterase 9 (256 aa).

The active-site Acyl-ester intermediate is serine 78. Active-site charge relay system residues include aspartate 206 and histidine 234.

Belongs to the AB hydrolase superfamily. Methylesterase family.

It catalyses the reaction methyl (indol-3-yl)acetate + H2O = (indol-3-yl)acetate + methanol + H(+). It carries out the reaction methyl (-)-jasmonate + H2O = jasmonate + methanol + H(+). The catalysed reaction is methyl salicylate + H2O = salicylate + methanol + H(+). It functions in the pathway plant hormone biosynthesis. It participates in lipid metabolism; oxylipin biosynthesis. Its activity is regulated as follows. Esterase activity is down-regulated by salicylic acid (SA). Its function is as follows. Methylesterase shown to have carboxylesterase activity, methyl indole-3-acetic acid (MeIAA) esterase activity, methyl salicylate (MeSA) esterase activity and methyl jasmonate (MeJA) esterase activity in vitro. Required to convert methyl salicylate (MeSA) to salicylic acid (SA) as part of the signal transduction pathways that activate systemic acquired resistance in systemic tissue. MeSA is believed to be an inactive form that needs to be demethylated to exert a biological effect. This chain is Methylesterase 9, found in Arabidopsis thaliana (Mouse-ear cress).